Here is a 285-residue protein sequence, read N- to C-terminus: tRNA (guanine-N(7)-)-methyltransferase (285 aa).

S-adenosyl-L-methionine-binding positions include G102, 125–126 (EI), 160–161 (NA), and C180. D183 is a catalytic residue. 258–260 (TEE) serves as a coordination point for S-adenosyl-L-methionine.

The protein belongs to the class I-like SAM-binding methyltransferase superfamily. TrmB family. Forms a complex with TRM82.

It is found in the nucleus. The enzyme catalyses guanosine(46) in tRNA + S-adenosyl-L-methionine = N(7)-methylguanosine(46) in tRNA + S-adenosyl-L-homocysteine. The protein operates within tRNA modification; N(7)-methylguanine-tRNA biosynthesis. In terms of biological role, catalyzes the formation of N(7)-methylguanine at position 46 (m7G46) in tRNA. The sequence is that of tRNA (guanine-N(7)-)-methyltransferase from Candida glabrata (strain ATCC 2001 / BCRC 20586 / JCM 3761 / NBRC 0622 / NRRL Y-65 / CBS 138) (Yeast).